Reading from the N-terminus, the 61-residue chain is MAKKSMIAKCNRPAKFSSREYTRCARCGRPHSVYRKFHLCRICLRELAHKGQIPGLKKASW.

The Zn(2+) site is built by C24, C27, C40, and C43.

The protein belongs to the universal ribosomal protein uS14 family. Zinc-binding uS14 subfamily. As to quaternary structure, part of the 30S ribosomal subunit. Contacts proteins S3 and S10. Zn(2+) is required as a cofactor.

Binds 16S rRNA, required for the assembly of 30S particles and may also be responsible for determining the conformation of the 16S rRNA at the A site. The chain is Small ribosomal subunit protein uS14B from Limosilactobacillus reuteri (strain DSM 20016) (Lactobacillus reuteri).